The primary structure comprises 377 residues: Queuine tRNA-ribosyltransferase (377 aa).

Aspartate 91 acts as the Proton acceptor in catalysis. Substrate-binding positions include 91–95 (DSGGF), aspartate 145, glutamine 189, and glycine 216. The tract at residues 247–253 (GVGKPED) is RNA binding. Residue aspartate 266 is the Nucleophile of the active site. The tract at residues 271–275 (TRNAR) is RNA binding; important for wobble base 34 recognition. Cysteine 304, cysteine 306, cysteine 309, and histidine 335 together coordinate Zn(2+).

The protein belongs to the queuine tRNA-ribosyltransferase family. As to quaternary structure, homodimer. Within each dimer, one monomer is responsible for RNA recognition and catalysis, while the other monomer binds to the replacement base PreQ1. Zn(2+) serves as cofactor.

It carries out the reaction 7-aminomethyl-7-carbaguanine + guanosine(34) in tRNA = 7-aminomethyl-7-carbaguanosine(34) in tRNA + guanine. Its pathway is tRNA modification; tRNA-queuosine biosynthesis. In terms of biological role, catalyzes the base-exchange of a guanine (G) residue with the queuine precursor 7-aminomethyl-7-deazaguanine (PreQ1) at position 34 (anticodon wobble position) in tRNAs with GU(N) anticodons (tRNA-Asp, -Asn, -His and -Tyr). Catalysis occurs through a double-displacement mechanism. The nucleophile active site attacks the C1' of nucleotide 34 to detach the guanine base from the RNA, forming a covalent enzyme-RNA intermediate. The proton acceptor active site deprotonates the incoming PreQ1, allowing a nucleophilic attack on the C1' of the ribose to form the product. After dissociation, two additional enzymatic reactions on the tRNA convert PreQ1 to queuine (Q), resulting in the hypermodified nucleoside queuosine (7-(((4,5-cis-dihydroxy-2-cyclopenten-1-yl)amino)methyl)-7-deazaguanosine). In Vibrio parahaemolyticus serotype O3:K6 (strain RIMD 2210633), this protein is Queuine tRNA-ribosyltransferase.